Consider the following 183-residue polypeptide: UPF0398 protein BLi02355/BL05236 (183 aa).

This sequence belongs to the UPF0398 family.

This Bacillus licheniformis (strain ATCC 14580 / DSM 13 / JCM 2505 / CCUG 7422 / NBRC 12200 / NCIMB 9375 / NCTC 10341 / NRRL NRS-1264 / Gibson 46) protein is UPF0398 protein BLi02355/BL05236.